Consider the following 71-residue polypeptide: uncharacterized protein (71 aa).

The span at 1–10 (MHRKKRKKEK) shows a compositional bias: basic residues. Positions 1–20 (MHRKKRKKEKKRTEKDNTTN) are disordered. The helical transmembrane segment at 21-43 (LPPLFLFPCSLSLPTLLAPVHYI) threads the bilayer.

It localises to the membrane. This is an uncharacterized protein from Saccharomyces cerevisiae (strain ATCC 204508 / S288c) (Baker's yeast).